The sequence spans 436 residues: Peptidase B (436 aa).

Residues K201 and D206 each contribute to the Mn(2+) site. Residue K213 is part of the active site. Residues D224, D283, and E285 each coordinate Mn(2+). The active site involves R287.

Belongs to the peptidase M17 family. In terms of assembly, homohexamer. The cofactor is Mn(2+).

The protein resides in the cytoplasm. The enzyme catalyses Release of an N-terminal amino acid, Xaa, from a peptide or arylamide. Xaa is preferably Glu or Asp but may be other amino acids, including Leu, Met, His, Cys and Gln.. Probably plays an important role in intracellular peptide degradation. The sequence is that of Peptidase B from Pectobacterium atrosepticum (strain SCRI 1043 / ATCC BAA-672) (Erwinia carotovora subsp. atroseptica).